The sequence spans 142 residues: Large ribosomal subunit protein uL11 (142 aa).

Belongs to the universal ribosomal protein uL11 family. In terms of assembly, part of the ribosomal stalk of the 50S ribosomal subunit. Interacts with L10 and the large rRNA to form the base of the stalk. L10 forms an elongated spine to which L12 dimers bind in a sequential fashion forming a multimeric L10(L12)X complex. Post-translationally, one or more lysine residues are methylated.

Forms part of the ribosomal stalk which helps the ribosome interact with GTP-bound translation factors. This is Large ribosomal subunit protein uL11 from Xanthomonas campestris pv. campestris (strain 8004).